The following is a 335-amino-acid chain: Syntaxin-18 (335 aa).

At 1-309 the chain is on the cytoplasmic side; it reads MAVDITLLFR…EDIREAIKNN (309 aa). Over residues 168-208 the composition is skewed to basic and acidic residues; sequence KLEPEPNTKTRESTSSEKVSRSPSKDSEENPATEERPEKIL. The tract at residues 168 to 226 is disordered; sequence KLEPEPNTKTRESTSSEKVSRSPSKDSEENPATEERPEKILAETQPELGTWGDGKGEDE. The t-SNARE coiled-coil homology domain occupies 243 to 305; the sequence is IGEMNSLFDE…KEGNEDIREA (63 aa). A helical; Anchor for type IV membrane protein transmembrane segment spans residues 310-330; it reads AGFRVWILFFLVMCSFSLLFL. At 331-335 the chain is on the vesicular side; it reads DWYDS.

This sequence belongs to the syntaxin family. In terms of assembly, component of a SNARE complex consisting of STX18, USE1L, BNIP1/SEC20L, and SEC22B. RINT1/TIP20L and ZW10 are associated with the complex through interaction with BNIP1/SEC20L. Interacts directly with USE1L and BNIP1/SEC20L.

Its subcellular location is the endoplasmic reticulum membrane. It is found in the golgi apparatus membrane. Syntaxin that may be involved in targeting and fusion of Golgi-derived retrograde transport vesicles with the ER. In Pongo abelii (Sumatran orangutan), this protein is Syntaxin-18 (STX18).